The sequence spans 738 residues: Junction plakoglobin (738 aa).

ARM repeat units lie at residues 128–167 (NYQDDAELATRAIPELTKLLNDEDPMVVNKASMIVNQLSK), 168–211 (KEAS…LSHH), 212–251 (REGLLSIFKSGGIPALVRMLSSPVESVLFYAITTLHNLLL), 254–293 (EGAKMAVRLADGLQKMVPLLNKNNPKFLAITTDCLQLLAY), 294–337 (GNQE…LSVC), 338–377 (PSNKPAIVEAGGMQALGKHLTSNSPRLVQNCLWTLRNLSD), 379–416 (ATKQEGLDNVLKILVNQLSSDDVNVLTCATGTLSNLTC), 419–460 (GRNK…HLTS), 466–506 (EVAQ…NLAL), 508–547 (PANHAPLYDAGVIPRLVQLLVKSHQDAQRHAASGTQQPYT), 570–609 (PVNRMDIYKLNTIPLFVQLLYSPVENIQRVSSGVLCELAQ), and 611–657 (KEAA…ADYR).

This sequence belongs to the beta-catenin family. As to quaternary structure, homodimer.

The protein resides in the cell junction. The protein localises to the adherens junction. It localises to the desmosome. It is found in the cytoplasm. Its subcellular location is the cytoskeleton. The protein resides in the membrane. In terms of biological role, common junctional plaque protein. The membrane-associated plaques are architectural elements in an important strategic position to influence the arrangement and function of both the cytoskeleton and the cells within the tissue. The presence of plakoglobin in both the desmosomes and in the intermediate junctions suggests that it plays a central role in the structure and function of submembranous plaques. The polypeptide is Junction plakoglobin (jup) (Xenopus laevis (African clawed frog)).